The chain runs to 349 residues: Histidinol-phosphate aminotransferase (349 aa).

At Lys-206 the chain carries N6-(pyridoxal phosphate)lysine.

It belongs to the class-II pyridoxal-phosphate-dependent aminotransferase family. Histidinol-phosphate aminotransferase subfamily. Homodimer. Pyridoxal 5'-phosphate serves as cofactor.

The enzyme catalyses L-histidinol phosphate + 2-oxoglutarate = 3-(imidazol-4-yl)-2-oxopropyl phosphate + L-glutamate. It participates in amino-acid biosynthesis; L-histidine biosynthesis; L-histidine from 5-phospho-alpha-D-ribose 1-diphosphate: step 7/9. The chain is Histidinol-phosphate aminotransferase from Streptococcus mutans serotype c (strain ATCC 700610 / UA159).